Here is a 312-residue protein sequence, read N- to C-terminus: Malate dehydrogenase (312 aa).

NAD(+) contacts are provided by residues 7-13 and aspartate 34; that span reads GAAGGIG. Substrate is bound by residues arginine 81 and arginine 87. Residues asparagine 94 and 117–119 contribute to the NAD(+) site; that span reads ITN. Substrate is bound by residues asparagine 119 and arginine 153. The active-site Proton acceptor is histidine 177. Methionine 227 is a binding site for NAD(+).

Belongs to the LDH/MDH superfamily. MDH type 1 family. In terms of assembly, homodimer.

It catalyses the reaction (S)-malate + NAD(+) = oxaloacetate + NADH + H(+). In terms of biological role, catalyzes the reversible oxidation of malate to oxaloacetate. This chain is Malate dehydrogenase, found in Edwardsiella ictaluri (strain 93-146).